A 275-amino-acid chain; its full sequence is 3-methyl-2-oxobutanoate hydroxymethyltransferase (275 aa).

Mg(2+) contacts are provided by D44 and D83. 3-methyl-2-oxobutanoate-binding positions include 44–45 (DS), D83, and K113. E115 serves as a coordination point for Mg(2+). Catalysis depends on E182, which acts as the Proton acceptor.

This sequence belongs to the PanB family. Homodecamer; pentamer of dimers. It depends on Mg(2+) as a cofactor.

The protein localises to the cytoplasm. The enzyme catalyses 3-methyl-2-oxobutanoate + (6R)-5,10-methylene-5,6,7,8-tetrahydrofolate + H2O = 2-dehydropantoate + (6S)-5,6,7,8-tetrahydrofolate. Its pathway is cofactor biosynthesis; (R)-pantothenate biosynthesis; (R)-pantoate from 3-methyl-2-oxobutanoate: step 1/2. Functionally, catalyzes the reversible reaction in which hydroxymethyl group from 5,10-methylenetetrahydrofolate is transferred onto alpha-ketoisovalerate to form ketopantoate. This chain is 3-methyl-2-oxobutanoate hydroxymethyltransferase, found in Clostridium beijerinckii (strain ATCC 51743 / NCIMB 8052) (Clostridium acetobutylicum).